A 370-amino-acid chain; its full sequence is Cobalt-precorrin-5B C(1)-methyltransferase (370 aa).

It belongs to the CbiD family.

The catalysed reaction is Co-precorrin-5B + S-adenosyl-L-methionine = Co-precorrin-6A + S-adenosyl-L-homocysteine. It participates in cofactor biosynthesis; adenosylcobalamin biosynthesis; cob(II)yrinate a,c-diamide from sirohydrochlorin (anaerobic route): step 6/10. Functionally, catalyzes the methylation of C-1 in cobalt-precorrin-5B to form cobalt-precorrin-6A. In Trichormus variabilis (strain ATCC 29413 / PCC 7937) (Anabaena variabilis), this protein is Cobalt-precorrin-5B C(1)-methyltransferase.